Consider the following 255-residue polypeptide: Ribonuclease HII (255 aa).

The region spanning 72–255 (AIICGIDEVG…KSFEPIKSLL (184 aa)) is the RNase H type-2 domain. Aspartate 78, glutamate 79, and aspartate 170 together coordinate a divalent metal cation.

It belongs to the RNase HII family. Requires Mn(2+) as cofactor. The cofactor is Mg(2+).

The protein resides in the cytoplasm. The enzyme catalyses Endonucleolytic cleavage to 5'-phosphomonoester.. Endonuclease that specifically degrades the RNA of RNA-DNA hybrids. In Staphylococcus aureus (strain MRSA252), this protein is Ribonuclease HII.